Consider the following 450-residue polypeptide: Keratin, type I cytoskeletal 25 (450 aa).

The span at 1–23 shows a compositional bias: low complexity; the sequence is MSLRLSSASRRSCPRPTTGSLRL. Residues 1–26 form a disordered region; that stretch reads MSLRLSSASRRSCPRPTTGSLRLSGG. The interval 1–78 is head; sequence MSLRLSSASR…VNERGLLSGN (78 aa). A coil 1A region spans residues 79–114; it reads EKVTMQNLNDRLASYLDSVHALEEANADLEQKIKGW. One can recognise an IF rod domain in the interval 79–394; it reads EKVTMQNLND…LLIGGDDGAC (316 aa). Residues 115–136 are linker 1; sequence YEKFGPGSCRGLDHDYSRYFPI. Residues 137–228 are coil 1B; the sequence is IDDLKNQIIA…KNHKEEMQVL (92 aa). Residues 229 to 251 form a linker 12 region; that stretch reads QCAAGGNVNVEMNAAPGVDLTVL. A coil 2 region spans residues 252 to 390; sequence LNNMRAEYEA…ETYCLLIGGD (139 aa). The tail stretch occupies residues 391-450; it reads DGACKSGGYKSKDYGSGNVGSQVKDSAKAIVVKKVLEEVDQRSKILTTRLRSLEEKSQSN. S442 bears the Phosphoserine mark.

This sequence belongs to the intermediate filament family. Heterodimer of a type I and a type II keratin. Heterodimer with type II keratin KRT5 leading to the formation of keratin intermediate filament (KIF) network. Interacts with KRT6A to form filaments.

The protein resides in the cytoplasm. Its function is as follows. Essential for the proper assembly of type I and type II keratin protein complexes and formation of keratin intermediate filaments in the inner root sheath (irs). Plays a role in the cytoskeleton organization. This Pan troglodytes (Chimpanzee) protein is Keratin, type I cytoskeletal 25 (KRT25).